Here is a 606-residue protein sequence, read N- to C-terminus: UPF0329 protein ECU06_0090 (606 aa).

Residues 317-401 (KKEEERREEE…SREACSKERN (85 aa)) are disordered. Over residues 328–353 (EKKRKEEVVQRNVEELLRGEEEEKKG) the composition is skewed to basic and acidic residues. Residues 354-367 (AKAKRKSKKKKKGS) are compositionally biased toward basic residues. Over residues 381 to 401 (SENREAQEMEDSREACSKERN) the composition is skewed to basic and acidic residues.

This sequence belongs to the UPF0329 family.

This is UPF0329 protein ECU06_0090 from Encephalitozoon cuniculi (strain GB-M1) (Microsporidian parasite).